Reading from the N-terminus, the 272-residue chain is 3-methyl-2-oxobutanoate hydroxymethyltransferase (272 aa).

The Mg(2+) site is built by Asp54 and Asp93. Residues 54–55 (DS), Asp93, and Lys121 each bind 3-methyl-2-oxobutanoate. Mg(2+) is bound at residue Glu123. Glu190 acts as the Proton acceptor in catalysis.

The protein belongs to the PanB family. As to quaternary structure, homodecamer; pentamer of dimers. Mg(2+) is required as a cofactor.

Its subcellular location is the cytoplasm. The catalysed reaction is 3-methyl-2-oxobutanoate + (6R)-5,10-methylene-5,6,7,8-tetrahydrofolate + H2O = 2-dehydropantoate + (6S)-5,6,7,8-tetrahydrofolate. Its pathway is cofactor biosynthesis; (R)-pantothenate biosynthesis; (R)-pantoate from 3-methyl-2-oxobutanoate: step 1/2. Functionally, catalyzes the reversible reaction in which hydroxymethyl group from 5,10-methylenetetrahydrofolate is transferred onto alpha-ketoisovalerate to form ketopantoate. The polypeptide is 3-methyl-2-oxobutanoate hydroxymethyltransferase (Janthinobacterium sp. (strain Marseille) (Minibacterium massiliensis)).